The following is a 152-amino-acid chain: Small ribosomal subunit protein bS6 (152 aa).

This sequence belongs to the bacterial ribosomal protein bS6 family.

In terms of biological role, binds together with bS18 to 16S ribosomal RNA. In Bdellovibrio bacteriovorus (strain ATCC 15356 / DSM 50701 / NCIMB 9529 / HD100), this protein is Small ribosomal subunit protein bS6.